We begin with the raw amino-acid sequence, 340 residues long: Nicotianamine synthase 9 (340 aa).

The protein belongs to the nicotianamine synthase (NAS)-like family. Homotrimer.

The enzyme catalyses 3 S-adenosyl-L-methionine = nicotianamine + 3 S-methyl-5'-thioadenosine + 3 H(+). Synthesizes nicotianamine, a polyamine that is the first intermediate in the synthesis of the phytosiderophores of the mugineic acid type found in gramineae which serves as a sensor for the physiological iron status within the plant, and/or might be involved in the transport of iron. This Hordeum vulgare (Barley) protein is Nicotianamine synthase 9 (NAS9).